We begin with the raw amino-acid sequence, 277 residues long: Undecaprenyl-diphosphatase (277 aa).

7 helical membrane-spanning segments follow: residues 5–25, 44–64, 86–106, 110–130, 184–204, 219–239, and 255–275; these read WTAA…FLPI, RAMA…VWEF, LNLL…ADTI, LFNA…MLWA, AATE…AVYS, VFAI…RALL, and IAFG…WASA.

The protein belongs to the UppP family.

It is found in the cell inner membrane. It catalyses the reaction di-trans,octa-cis-undecaprenyl diphosphate + H2O = di-trans,octa-cis-undecaprenyl phosphate + phosphate + H(+). Catalyzes the dephosphorylation of undecaprenyl diphosphate (UPP). Confers resistance to bacitracin. This Pseudomonas savastanoi pv. phaseolicola (strain 1448A / Race 6) (Pseudomonas syringae pv. phaseolicola (strain 1448A / Race 6)) protein is Undecaprenyl-diphosphatase.